The chain runs to 333 residues: Photosystem II assembly lipoprotein Ycf48 (333 aa).

The signal sequence occupies residues 1-23 (MTRFVSSAINLLLVLVLGVSLSG). Residue Cys24 is the site of N-palmitoyl cysteine attachment. Residue Cys24 is the site of S-diacylglycerol cysteine attachment.

The protein belongs to the Ycf48 family. Part of early PSII assembly complexes which includes D1 (psbA) and PsbI; not found in mature PSII. Binds to the lumenal side of PSII complexes. Interacts with YidC.

Its subcellular location is the cellular thylakoid membrane. Its function is as follows. A factor required for optimal assembly of photosystem II (PSII), acting in the early stages of PSII assembly. Also plays a role in replacement of photodamaged D1 (psbA). Assists YidC in synthesis of chlorophyll-binding proteins. In Parasynechococcus marenigrum (strain WH8102), this protein is Photosystem II assembly lipoprotein Ycf48.